A 797-amino-acid chain; its full sequence is MAWDMCSQDSVWSDIECAALVGEDQPLCPDLPELDLSELDVNDLDTDSFLGGLKWCSDQSEIISNQYNNEPANIFEKIDEENEANLLAVLTETLDSLPVDEDGLPSFDALTDGAVTTDNEASPSSMPDGTPPPQEAEEPSLLKKLLLAPANTQLSYNECSGLSTQNHAANHTHRIRTNPAIVKTENSWSNKAKSICQQQKPQRRPCSELLKYLTTNDDPPHTKPTENRNSSRDKCASKKKSHTQPQSQHAQAKPTTLSLPLTPESPNDPKGSPFENKTIERTLSVELSGTAGLTPPTTPPHKANQDNPFKASPKLKPSCKTVVPPPTKRARYSECSGTQGSHSTKKGPEQSELYAQLSKSSGLSRGHEERKTKRPSLRLFGDHDYCQSLNSKTDILINISQELQDSRQLDFKDASCDWQGHICSSTDSGQCYLRETLEASKQVSPCSTRKQLQDQEIRAELNKHFGHPCQAVFDDKSDKTSELRDGDFSNEQFSKLPVFINSGLAMDGLFDDSEDESDKLSYPWDGTQPYSLFDVSPSCSSFNSPCRDSVSPPKSLFSQRPQRMRSRSRSFSRHRSCSRSPYSRSRSRSPGSRSSSRSCYYYESSHYRHRTHRNSPLYVRSRSRSPYSRRPRYDSYEAYEHERLKRDEYRKEHEKRESERAKQRERQKQKAIEERRVIYVGKIRPDTTRTELRDRFEVFGEIEECTVNLRDDGDSYGFITYRYTCDAFAALENGYTLRRSNETDFELYFCGRKQFFKSNYADLDTNSDDFDPASTKSKYDSLDFDSLLKEAQRSLRR.

Residue Lys77 is modified to N6-acetyllysine. The segment at 101–138 (EDGLPSFDALTDGAVTTDNEASPSSMPDGTPPPQEAEE) is disordered. The segment covering 114–127 (AVTTDNEASPSSMP) has biased composition (polar residues). An LXXLL motif motif is present at residues 142 to 146 (LKKLL). Lys144 is subject to N6-acetyllysine. Thr177 is subject to Phosphothreonine; by AMPK. Lys183 carries the N6-acetyllysine modification. The segment at 212–276 (YLTTNDDPPH…NDPKGSPFEN (65 aa)) is disordered. Residues 218–236 (DPPHTKPTENRNSSRDKCA) are compositionally biased toward basic and acidic residues. The segment covering 243 to 259 (TQPQSQHAQAKPTTLSL) has biased composition (polar residues). Lys253, Lys270, Lys277, Lys320, Lys346, Lys412, Lys441, and Lys450 each carry N6-acetyllysine. Positions 289-376 (GTAGLTPPTT…HEERKTKRPS (88 aa)) are disordered. Residues 292–338 (GLTPPTTPPHKANQDNPFKASPKLKPSCKTVVPPPTKRARYSECSGT) form an interaction with PPARG region. The interval 349-797 (EQSELYAQLS…LKEAQRSLRR (449 aa)) is mediates interaction with RNF34. Residue Ser538 is modified to Phosphoserine; by AMPK. 3 disordered regions span residues 543–598 (NSPC…SSRS), 612–634 (HRNS…PRYD), and 648–668 (EYRK…ERQK). The segment covering 562-577 (QRMRSRSRSFSRHRSC) has biased composition (basic residues). Low complexity predominate over residues 578-598 (SRSPYSRSRSRSPGSRSSSRS). A compositionally biased stretch (basic residues) spans 621-630 (SRSRSPYSRR). The region spanning 676–752 (RVIYVGKIRP…TDFELYFCGR (77 aa)) is the RRM domain. N6-acetyllysine is present on residues Lys757 and Lys778.

Homooligomer. Interacts with MYBBP1A; inhibits MYBBP1A transcriptional activation. Interacts with PRDM16, LPIN1 and PML. Interacts (via LXXLL motif) with RORA and RORC (via AF-2 motif); activates RORA and RORC transcriptional activation. Interacts with LRPPRC. Interacts with FOXO1. Interacts with NR5A2. Phosphorylation by AMPK in skeletal muscle increases activation of its own promoter. Phosphorylated by CLK2. Post-translationally, heavily acetylated by KAT2A/GCN5 under conditions of high nutrients, leading to inactivation of PPARGC1A. Deacetylated by SIRT1 in low nutrients/high NAD conditions, leading to its activation. In terms of processing, ubiquitinated. Ubiquitination by RNF34 induces proteasomal degradation. In terms of tissue distribution, white quadriceps and red tibialis anterior (TA) muscles, liver, kidney and brown adipose tissue (at protein level). Skeletal muscle, brown adipose tissue, heart, kidney and brain.

It localises to the nucleus. Its subcellular location is the PML body. Functionally, transcriptional coactivator for steroid receptors and nuclear receptors. Greatly increases the transcriptional activity of PPARG and thyroid hormone receptor on the uncoupling protein promoter. Can regulate key mitochondrial genes that contribute to the program of adaptive thermogenesis. Plays an essential role in metabolic reprogramming in response to dietary availability through coordination of the expression of a wide array of genes involved in glucose and fatty acid metabolism. Acts as a key regulator of gluconeogenesis: stimulates hepatic gluconeogenesis by increasing the expression of gluconeogenic enzymes, and acting together with FOXO1 to promote the fasting gluconeogenic program. Induces the expression of PERM1 in the skeletal muscle in an ESRRA-dependent manner. Also involved in the integration of the circadian rhythms and energy metabolism. Required for oscillatory expression of clock genes, such as BMAL1 and NR1D1, through the coactivation of RORA and RORC, and metabolic genes, such as PDK4 and PEPCK. This Mus musculus (Mouse) protein is Peroxisome proliferator-activated receptor gamma coactivator 1-alpha (Ppargc1a).